The primary structure comprises 560 residues: Nucleoprotein (560 aa).

Residues 53–236 (MRKDKRTDTD…ITQEQSQINV (184 aa)) are binding site for the cap structure m7GTP. The interval 333-353 (LTDTGSPNHPPVRNGGSPRLS) is disordered. D379 and E381 together coordinate Mn(2+). Zn(2+) is bound by residues E389, C496, H499, and C520. Mn(2+) is bound at residue D524.

The protein belongs to the arenaviridae nucleocapsid protein family. In terms of assembly, homomultimerizes to form the nucleocapsid. Binds to viral genomic RNA. Interacts with glycoprotein G2. Interacts with protein Z; this interaction probably directs the encapsidated genome to budding sites. Interacts with protein L; this interaction does not interfere with Z-L interaction. Interacts with host IKBKE (via Protein kinase domain); the interaction inhibits IKBKE kinase activity.

It is found in the virion. The protein resides in the host cytoplasm. In terms of biological role, encapsidates the genome, protecting it from nucleases. The encapsidated genomic RNA is termed the nucleocapsid (NC). Serves as template for viral transcription and replication. The increased presence of protein N in host cell does not seem to trigger the switch from transcription to replication as observed in other negative strain RNA viruses. Through the interaction with host IKBKE, strongly inhibits the phosphorylation and nuclear translocation of host IRF3, a protein involved in interferon activation pathway, leading to the inhibition of interferon-beta and IRF3-dependent promoters activation. Also encodes a functional 3'-5' exoribonuclease that degrades preferentially dsRNA substrates and thereby participates in the suppression of interferon induction. The polypeptide is Nucleoprotein (Pirital mammarenavirus (isolate Rat/Venezuela/VAV-488/1995) (PIRV)).